Consider the following 922-residue polypeptide: Lysine-specific demethylase 7A (922 aa).

The PHD-type zinc-finger motif lies at 6-57 (PVYCVCRQPYDVSRFMIECDICKDWFHSSCVKVEEHQAADIDLYHCPNCEVL). The JmjC domain maps to 199 to 355 (FSDTKMADLV…MQLRCYEMEK (157 aa)). A substrate-binding site is contributed by threonine 248. Histidine 251 and aspartate 253 together coordinate Fe cation. Residue lysine 268 coordinates substrate. Fe cation is bound at residue histidine 323. Disordered regions lie at residues 445-490 (EEEG…TKTP), 565-607 (RSLY…TQKP), 622-711 (GSSE…EQEA), 754-773 (GKEH…HHVK), and 872-902 (LHPT…MATA). The span at 473 to 483 (HHSGRKARRLR) shows a compositional bias: basic residues. Positions 648-666 (ESESSGDDDDEEEEEEEER) are enriched in acidic residues. 2 stretches are compositionally biased toward basic and acidic residues: residues 667 to 683 (QEPI…RRLP) and 691 to 701 (PDHDSPQKREC).

This sequence belongs to the JHDM1 histone demethylase family. JHDM1D subfamily. The cofactor is Fe(2+).

It is found in the nucleus. Histone demethylase required for brain development. Specifically demethylates dimethylated 'Lys-9' and 'Lys-27' (H3K9me2 and H3K27me2, respectively) of histone H3 and monomethylated histone H4 'Lys-20' residue (H4K20Me1), thereby playing a central role in histone code. This chain is Lysine-specific demethylase 7A (kdm7a), found in Xenopus tropicalis (Western clawed frog).